Here is a 335-residue protein sequence, read N- to C-terminus: Deoxyhypusine hydroxylase (335 aa).

HEAT-like PBS-type repeat units follow at residues 71-97 (LKHELAYCLGQTRNPESVPFLQQVAKD), 104-130 (CRHEAAEALGALGYEDSLEILKALRDN), 200-233 (LRYRAMFALRDLASPPDLPTATRAVEALAKGLKD), 238-264 (FRHEIAFVFGQLCHPASIPSLTEALSN), and 271-298 (VRHEAAEALGSLGDCEGVEETLRKFLND). His-73, Glu-74, His-106, and Glu-107 together coordinate Fe cation. The Fe cation site is built by His-240, Glu-241, His-273, and Glu-274.

The protein belongs to the deoxyhypusine hydroxylase family. The cofactor is Fe(2+).

It is found in the cytoplasm. The protein localises to the nucleus. The catalysed reaction is [eIF5A protein]-deoxyhypusine + AH2 + O2 = [eIF5A protein]-hypusine + A + H2O. It participates in protein modification; eIF5A hypusination. Catalyzes the hydroxylation of the N(6)-(4-aminobutyl)-L-lysine intermediate to form hypusine, an essential post-translational modification only found in mature eIF-5A factor. This chain is Deoxyhypusine hydroxylase (lia1), found in Neosartorya fischeri (strain ATCC 1020 / DSM 3700 / CBS 544.65 / FGSC A1164 / JCM 1740 / NRRL 181 / WB 181) (Aspergillus fischerianus).